Consider the following 216-residue polypeptide: Soluble inorganic pyrophosphatase 5 (216 aa).

Positions 1–20 are disordered; that stretch reads MNGEEVKTSQPQKKLQNPTP. Residues 8 to 20 are compositionally biased toward polar residues; the sequence is TSQPQKKLQNPTP. Residues Lys-66 and Arg-80 each coordinate substrate. Tyr-88 acts as the Proton donor in catalysis. Residue Tyr-92 coordinates substrate. The Mg(2+) site is built by Asp-102, Asp-107, and Asp-139. Tyr-176 lines the substrate pocket.

The protein belongs to the PPase family. It depends on Mg(2+) as a cofactor.

The protein localises to the cytoplasm. It catalyses the reaction diphosphate + H2O = 2 phosphate + H(+). This Arabidopsis thaliana (Mouse-ear cress) protein is Soluble inorganic pyrophosphatase 5.